A 70-amino-acid chain; its full sequence is Large ribosomal subunit protein eL38 (70 aa).

Lysine 4 participates in a covalent cross-link: Glycyl lysine isopeptide (Lys-Gly) (interchain with G-Cter in SUMO2). Lysine 9 is modified (N6-acetyllysine; alternate). Residue lysine 9 forms a Glycyl lysine isopeptide (Lys-Gly) (interchain with G-Cter in SUMO2); alternate linkage. An N6-acetyllysine modification is found at lysine 67.

It belongs to the eukaryotic ribosomal protein eL38 family. In terms of assembly, component of the large ribosomal subunit.

The protein localises to the cytoplasm. Component of the large ribosomal subunit. The ribosome is a large ribonucleoprotein complex responsible for the synthesis of proteins in the cell. This chain is Large ribosomal subunit protein eL38 (RPL38), found in Macaca fascicularis (Crab-eating macaque).